The chain runs to 69 residues: DNA-directed RNA polymerase subunit omega (69 aa).

Belongs to the RNA polymerase subunit omega family. The RNAP catalytic core consists of 2 alpha, 1 beta, 1 beta' and 1 omega subunit. When a sigma factor is associated with the core the holoenzyme is formed, which can initiate transcription.

It catalyses the reaction RNA(n) + a ribonucleoside 5'-triphosphate = RNA(n+1) + diphosphate. In terms of biological role, promotes RNA polymerase assembly. Latches the N- and C-terminal regions of the beta' subunit thereby facilitating its interaction with the beta and alpha subunits. The chain is DNA-directed RNA polymerase subunit omega from Hahella chejuensis (strain KCTC 2396).